Reading from the N-terminus, the 451-residue chain is Scaffold protein ILK (451 aa).

Residue M1 is modified to N-acetylmethionine. ANK repeat units follow at residues 2 to 30 (DDIF…LNQG), 31 to 63 (DDHG…INVM), 64 to 96 (NRGD…INAV), 97 to 129 (NEHG…VSIC), and 130 to 174 (NKYG…GTTR). The interaction with LIMS1 stretch occupies residues 33–139 (HGFSPLHWAC…NKYGEMPMDK (107 aa)). T173 carries the phosphothreonine modification. The interval 180–212 (GTLNKHSGIDFKQLNFLAKLNENHSGELWKGRW) is PH-like; mediates interaction with TGFB1I1. At S186 the chain carries Phosphoserine. The Protein kinase domain occupies 193–445 (LNFLAKLNEN…PKFDMIVPIL (253 aa)). N200, N202, H203, and S204 together coordinate ATP. Position 246 is a phosphoserine (S246). Residues H270, M272, and N279 each contribute to the ATP site. Residue D339 participates in Mg(2+) binding. K341 provides a ligand contact to ATP. Residues 363-371 (KKPEDTNRR) carry the Nuclear localization signal motif. N6-acetyllysine is present on K425.

It belongs to the protein kinase superfamily. TKL Ser/Thr protein kinase family. As to quaternary structure, component of the heterotrimeric IPP (ILK-PINCH-PARVIN) complex composed of ILK, LIMS1/PINCH and PARVA; the complex binds to F-actin via the C-terminal tail of LIMS1 and the N-terminal region of PARVA, promoting F-actin filament bundling. Formation of the IPP complex is dependent on protein kinase C and precedes integrin-mediated cell adhesion and spreading. ILK also interacts with LIMS2/PINCH2 and with PARVB and PARVG which may substitute for LIMS1 and PARVA in the IPP complex; PARVA and PARVB compete for the same binding site. Interaction with PARVG promotes the establishment of cell polarity required for leukocyte migration. Interacts with the cytoplasmic domain of integrin ITGB1 and may also interact with integrins ITGB2, ITGB3 and/or ITGB5. Interacts probably also with TGFB1I1. Interacts (via ANK repeats) with EPHA1 (via SAM domain); stimulated by EFNA1 but independent of the kinase activity of EPHA1. Interacts with FERMT2. Interacts with LIMD2; leading to activate the protein kinase activity. Interacts with PXN/PAXILLIN (via LD motif 4). Interacts with CCDC25 (via cytoplasmic region); initiating the ILK-PARVB cascade to induce cytoskeleton rearrangement and directional migration of cells. Interacts with IQGAP1; the interaction is required for localization of IQGAP1 to the cell cortex. In terms of processing, phosphorylation by PAK1 modulates ILK subcellular location by promoting its nuclear export.

The protein localises to the cell junction. It is found in the focal adhesion. It localises to the cell membrane. Its subcellular location is the cell projection. The protein resides in the lamellipodium. The protein localises to the cytoplasm. It is found in the myofibril. It localises to the sarcomere. Its subcellular location is the nucleus. The protein resides in the cytoskeleton. The protein localises to the microtubule organizing center. It is found in the centrosome. It localises to the cell cortex. Its function is as follows. Scaffold protein which mediates protein-protein interactions during a range of cellular events including focal adhesion assembly, cell adhesion and cell migration. Regulates integrin-mediated signal transduction by contributing to inside-out integrin activation. Recruits PARVA and LIMS1/PITCH to form the heterotrimeric IPP (ILK-PINCH-PARVIN) complex which binds to F-actin via the C-terminal tail of LIMS1 and the N-terminal region of PARVA, promoting F-actin filament bundling, a process required to generate force for actin cytoskeleton reorganization and subsequent dynamic cell adhesion events such as cell spreading and migration. Binding to PARVA promotes effective assembly of ILK into focal adhesions while PARVA-bound ILK can simultaneously engage integrin-beta cytoplasmic tails to mediate cell adhesion. Plays a role with PARVG in promoting the cell adhesion and spreading of leukocytes. Acts as an upstream effector of both AKT1/PKB and GSK3. Mediates trafficking of caveolae to the cell surface in an ITGB1-dependent manner by promoting the recruitment of IQGAP1 to the cell cortex which cooperates with its effector DIAPH1 to locally stabilize microtubules and allow stable insertion of caveolae into the plasma membrane. Required for the maintenance of mitotic spindle integrity by promoting phosphorylation of TACC3 by AURKA. Associates with chromatin and may act as a negative regulator of transcription when located in the nucleus. This Cavia porcellus (Guinea pig) protein is Scaffold protein ILK.